The chain runs to 1293 residues: DNA repair protein complementing XP-C cells homolog (1293 aa).

Disordered stretches follow at residues 1-199 (MSDE…FEDK), 217-239 (ERTR…QAAT), 255-341 (QSVE…NISG), 514-640 (DLIP…SKCL), and 658-919 (LSSK…EPAK). Residues 18–30 (DEWKPSKDVKGGE) show a composition bias toward basic and acidic residues. 3 positions are modified to phosphoserine: serine 31, serine 32, and serine 37. Residues 31 to 43 (SSDDDDSDFDELQ) are compositionally biased toward acidic residues. A compositionally biased stretch (low complexity) spans 51–60 (SSGRSSAVAG). Composition is skewed to polar residues over residues 101 to 130 (FPTS…SGAR) and 226 to 238 (RNVT…SQAA). Positions 288–301 (SKTKSTRIKRHTKT) are enriched in basic residues. The segment covering 313–335 (DTDDSDFEEVADADLSSDQDDGE) has biased composition (acidic residues). Basic and acidic residues predominate over residues 520-578 (LRPDDKNKSQTVESERESEDEKPKKDKKAGKPAEKESSKSTISKEAEKKNNAKKAEAKP). Phosphoserine occurs at positions 533 and 537. Residues 580–594 (SKSTTKGSETTKSGT) show a composition bias toward low complexity. Basic and acidic residues predominate over residues 598 to 612 (VKKELSLSSKLVEKS). A compositionally biased stretch (low complexity) spans 658 to 692 (LSSKLVLKSKNQSSFSSNKSDTSFEENPSTSSSSK). Basic and acidic residues predominate over residues 693-711 (SLKEETAKLSSSKLEDKKV). Over residues 720-737 (KVQSSLLKRVTTQNISES) the composition is skewed to polar residues. Positions 806–818 (HLQEQRNTRETRS) are enriched in basic and acidic residues. 2 positions are modified to phosphoserine: serine 908 and serine 911. 3 short sequence motifs (nuclear localization signal) span residues 922 to 938 (KKAP…RKDR), 1195 to 1211 (KKTV…ICKK), and 1275 to 1291 (KKLI…KKKY).

It belongs to the XPC family. As to quaternary structure, heterodimer.

The protein localises to the nucleus. Its function is as follows. Involved in DNA excision repair. May play a part in DNA damage recognition and/or in altering chromatin structure to allow access by damage-processing enzymes. In terms of biological role, involved in nucleotide excision repair of DNA damaged with UV light, bulky adducts, or cross-linking agents. This is DNA repair protein complementing XP-C cells homolog from Drosophila melanogaster (Fruit fly).